We begin with the raw amino-acid sequence, 260 residues long: Tropinone reductase homolog At1g07450 (260 aa).

An NADP(+)-binding site is contributed by 14 to 38; sequence LVTGGSKGIGYAIVEELVGFGARVH. Residue Ser-147 participates in substrate binding. Tyr-159 (proton acceptor) is an active-site residue.

It belongs to the short-chain dehydrogenases/reductases (SDR) family. SDR65C subfamily.

The polypeptide is Tropinone reductase homolog At1g07450 (Arabidopsis thaliana (Mouse-ear cress)).